The primary structure comprises 1076 residues: Serine/threonine-protein phosphatase 6 regulatory ankyrin repeat subunit C (1076 aa).

28 ANK repeats span residues 7-36 (TDQPPLVQAIFSRDVEEVRSLLSQKENINV), 40-69 (ERRTPLHAAAYVGDVPILQLLLMSGANVNA), 73-102 (LWLTPLHRAAASRNEKVLGLLLAHSADVNA), 106-135 (LWQTPLHVAAANRATKCAEALAPLLSSLNV), 139-168 (SGRSALHHAVHSGHLETVNLLLNKGASLNV), 172-201 (KERQPLHWAAFLGHLEVLKLLVARGADLGC), 205-234 (KGYGLLHTAAASGQIEVVKYLLRMGAEIDE), 238-267 (FGNTALHIACYLGQDAVAIELVNAGANVNQ), 271-301 (KGFTPLHVAAVSTNGALCLELLVNNGADVNY), 305-334 (EGKSPLHMAAIHGRFTRSQILIQNGSEIDC), 338-367 (FGNTPLHVAARYGHELLISTLMTNGADTAR), 371-400 (HDMFPLHLAVLFGFSDCCRKLLSSGQLYSI), 422-451 (LGRTCLHAAASGGNVECLNLLLSSGADLRR), 455-484 (FGRTPLHYAAANGSYQCAVTLVTAGAGVNE), 488-545 (KGCS…DPSL), 549-579 (QGYTAVHYAAAYGNRQNLELLLEMSFNCLED), 584-613 (IPVSPLHLAAYNGHCEALKTLAETLVNLDV), 617-646 (KGRTALFLATERGSTECVEVLTAHGASALI), 651-680 (RKWTPLHAAAASGHTDSLHLLIDSGERADI), 687-716 (YGQTPLMLAIMNGHVDCVHLLLEKGSTADA), 720-749 (RGRTALHRGAVTGCEDCLAALLDHDAFVLC), 753-782 (KGRTPIHLASACGHTAVLRTLLQAALSTDP), 790-819 (SGYSPMHWASYTGHEDCLELLLEHSPFSYL), 822-852 (NPFTPLHCAVINNQDSTTEMLLGALGAKIVN), 857-886 (KGRTPLHAAAFADNVSGLRMLLQHQAEVNA), 890-920 (TGRTALMTAAENGQTAAVEFLLYRGKADLTV), 924-953 (NKNTALHLACSKGHEKCALMILAETQDLGL), and 960-989 (ALQMPLHIAARNGLASVVQALLSHGATVLA). Positions 502 to 514 (YRRAEPHTPSSHD) are enriched in basic and acidic residues. The tract at residues 502–522 (YRRAEPHTPSSHDAEEDEPLK) is disordered. A phosphoserine mark is found at Ser1028 and Ser1075.

Protein phosphatase 6 (PP6) holoenzyme is proposed to be a heterotrimeric complex formed by the catalytic subunit, a SAPS domain-containing subunit (PP6R) and an ankyrin repeat-domain containing regulatory subunit (ARS). Interacts with PPP6R1.

Its function is as follows. Putative regulatory subunit of protein phosphatase 6 (PP6) that may be involved in the recognition of phosphoprotein substrates. This is Serine/threonine-protein phosphatase 6 regulatory ankyrin repeat subunit C (ANKRD52) from Homo sapiens (Human).